The primary structure comprises 211 residues: Thymidylate kinase (211 aa).

11-18 (GPDGAGKT) contacts ATP.

Belongs to the thymidylate kinase family.

The catalysed reaction is dTMP + ATP = dTDP + ADP. In terms of biological role, phosphorylation of dTMP to form dTDP in both de novo and salvage pathways of dTTP synthesis. This is Thymidylate kinase from Streptococcus agalactiae serotype Ia (strain ATCC 27591 / A909 / CDC SS700).